The following is a 151-amino-acid chain: Transcription antitermination protein NusB (151 aa).

This sequence belongs to the NusB family.

Its function is as follows. Involved in transcription antitermination. Required for transcription of ribosomal RNA (rRNA) genes. Binds specifically to the boxA antiterminator sequence of the ribosomal RNA (rrn) operons. This Hamiltonella defensa subsp. Acyrthosiphon pisum (strain 5AT) protein is Transcription antitermination protein NusB.